Consider the following 562-residue polypeptide: TBC1 domain family member 24 (562 aa).

A 1,2-diacyl-sn-glycero-3-phospho-(1D-myo-inositol) contacts are provided by residues Lys36, Arg40, Lys238, Arg242, and Arg293–Arg297. Residues Gly42–Pro259 enclose the Rab-GAP TBC domain. In terms of domain architecture, TLDc spans Glu337–Lys549. A disordered region spans residues Asn450–Ser471. Residues Ala454–Ile468 are compositionally biased toward basic and acidic residues.

As to quaternary structure, interacts with ARF6.

It is found in the cell membrane. The protein localises to the cytoplasm. The protein resides in the cytoplasmic vesicle membrane. It localises to the presynapse. May act as a GTPase-activating protein for Rab family protein(s). Involved in neuronal projections development, probably through a negative modulation of ARF6 function. Involved in the regulation of synaptic vesicle trafficking. This chain is TBC1 domain family member 24 (tbc1d24), found in Xenopus laevis (African clawed frog).